The primary structure comprises 630 residues: DNA mismatch repair protein MutL (630 aa).

Disordered stretches follow at residues 361-386 (VLSS…APAE) and 407-431 (FERK…GQAE). Residues 407 to 421 (FERKQEEEVGEERCS) are compositionally biased toward basic and acidic residues.

Belongs to the DNA mismatch repair MutL/HexB family.

Its function is as follows. This protein is involved in the repair of mismatches in DNA. It is required for dam-dependent methyl-directed DNA mismatch repair. May act as a 'molecular matchmaker', a protein that promotes the formation of a stable complex between two or more DNA-binding proteins in an ATP-dependent manner without itself being part of a final effector complex. The polypeptide is DNA mismatch repair protein MutL (Geobacillus kaustophilus (strain HTA426)).